Consider the following 495-residue polypeptide: uncharacterized protein (495 aa).

The FAD site is built by Ser16, Glu36, Trp45, Asp56, Tyr62, and Val105.

This sequence belongs to the FAD-binding monooxygenase family. It depends on FAD as a cofactor.

This is an uncharacterized protein from Mycobacterium tuberculosis (strain CDC 1551 / Oshkosh).